A 48-amino-acid polypeptide reads, in one-letter code: Delta-actitoxin-Bcg1b (48 aa).

3 disulfide bridges follow: Cys-4–Cys-45, Cys-6–Cys-35, and Cys-28–Cys-46.

Belongs to the sea anemone sodium channel inhibitory toxin family. Type I subfamily.

The protein resides in the secreted. Its subcellular location is the nematocyst. In terms of biological role, binds to the sodium channels Nav1.1/SCN1A (EC(50)=165 nM), Nav1.5/SCN5A (EC(50)=103 nM) and Nav1.6/SCN8A (EC(50)=133 nM), thereby delaying their inactivation. Also inhibits Nav1.2/SCN2A, Nav1.3/SCN3A, and Nav1.4/SCN4A, but to a lesser extent. Inhibits Nav1.5 differently from isoforms Nav1.1 and Nav1.6. In Nav1.5 the effect consists in a right-shift of inactivation; whereas in both Nav1.1 and Nav1.6 the effect consists in an incomplete inactivation. In Bunodosoma cangicum (Sea anemone), this protein is Delta-actitoxin-Bcg1b.